Consider the following 826-residue polypeptide: Leucine--tRNA ligase (826 aa).

The short motif at proline 42–histidine 52 is the 'HIGH' region element. The 'KMSKS' region signature appears at lysine 581–serine 585. Residue lysine 584 coordinates ATP.

Belongs to the class-I aminoacyl-tRNA synthetase family.

It localises to the cytoplasm. It carries out the reaction tRNA(Leu) + L-leucine + ATP = L-leucyl-tRNA(Leu) + AMP + diphosphate. This chain is Leucine--tRNA ligase, found in Desulforudis audaxviator (strain MP104C).